Consider the following 274-residue polypeptide: 2-dehydro-3-deoxyphosphooctonate aldolase (274 aa).

It belongs to the KdsA family.

It is found in the cytoplasm. It carries out the reaction D-arabinose 5-phosphate + phosphoenolpyruvate + H2O = 3-deoxy-alpha-D-manno-2-octulosonate-8-phosphate + phosphate. Its pathway is carbohydrate biosynthesis; 3-deoxy-D-manno-octulosonate biosynthesis; 3-deoxy-D-manno-octulosonate from D-ribulose 5-phosphate: step 2/3. It participates in bacterial outer membrane biogenesis; lipopolysaccharide biosynthesis. The protein is 2-dehydro-3-deoxyphosphooctonate aldolase of Rickettsia canadensis (strain McKiel).